The sequence spans 187 residues: Aminodeoxychorismate synthase component 2 (187 aa).

One can recognise a Glutamine amidotransferase type-1 domain in the interval 1–187 (MILLIDNYDS…HQLLANFLHR (187 aa)). Active-site residues include Cys79, His168, and Glu170.

Monomer. Heterodimer consisting of two non-identical subunits: a glutamine amidotransferase subunit (PabA) and a aminodeoxychorismate synthase subunit (PabB).

The enzyme catalyses chorismate + L-glutamine = 4-amino-4-deoxychorismate + L-glutamate. It participates in cofactor biosynthesis; tetrahydrofolate biosynthesis; 4-aminobenzoate from chorismate: step 1/2. Its activity is regulated as follows. Inhibited by 6-diazo-5-oxo-L-norleucine (DON). The inhibition is competitive with glutamine, but uncompetitive with chorismate. In terms of biological role, part of a heterodimeric complex that catalyzes the two-step biosynthesis of 4-amino-4-deoxychorismate (ADC), a precursor of p-aminobenzoate (PABA) and tetrahydrofolate. In the first step, a glutamine amidotransferase (PabA) generates ammonia as a substrate that, along with chorismate, is used in the second step, catalyzed by aminodeoxychorismate synthase (PabB) to produce ADC. PabA converts glutamine into glutamate only in the presence of stoichiometric amounts of PabB. The chain is Aminodeoxychorismate synthase component 2 from Escherichia coli (strain K12).